The chain runs to 57 residues: UPF0391 membrane protein Patl_0263 (57 aa).

Transmembrane regions (helical) follow at residues 8–28 (FFVL…GVAA) and 30–50 (IAKV…VLAF).

It belongs to the UPF0391 family.

It is found in the cell membrane. The polypeptide is UPF0391 membrane protein Patl_0263 (Pseudoalteromonas atlantica (strain T6c / ATCC BAA-1087)).